The following is a 215-amino-acid chain: Leucyl/phenylalanyl-tRNA--protein transferase (215 aa).

It belongs to the L/F-transferase family.

Its subcellular location is the cytoplasm. It catalyses the reaction N-terminal L-lysyl-[protein] + L-leucyl-tRNA(Leu) = N-terminal L-leucyl-L-lysyl-[protein] + tRNA(Leu) + H(+). The enzyme catalyses N-terminal L-arginyl-[protein] + L-leucyl-tRNA(Leu) = N-terminal L-leucyl-L-arginyl-[protein] + tRNA(Leu) + H(+). It carries out the reaction L-phenylalanyl-tRNA(Phe) + an N-terminal L-alpha-aminoacyl-[protein] = an N-terminal L-phenylalanyl-L-alpha-aminoacyl-[protein] + tRNA(Phe). In terms of biological role, functions in the N-end rule pathway of protein degradation where it conjugates Leu, Phe and, less efficiently, Met from aminoacyl-tRNAs to the N-termini of proteins containing an N-terminal arginine or lysine. This chain is Leucyl/phenylalanyl-tRNA--protein transferase, found in Campylobacter jejuni subsp. jejuni serotype O:2 (strain ATCC 700819 / NCTC 11168).